The primary structure comprises 214 residues: Ras-related protein Rab-17 (214 aa).

At Ser-29 the chain carries Phosphoserine. The GTP site is built by Gly-31, Lys-32, Thr-33, and Thr-50. 3 residues coordinate Mg(2+): Thr-33, Thr-50, and Asp-73. The short motif at 43–54 (DFSNVLPTVGCA) is the Switch 1 element. The short motif at 75-91 (AGQEKYQSVCHLYFRGA) is the Switch 2 element. GTP-binding residues include Gly-76, Asn-132, Lys-133, Asp-135, and Ala-163. Residues 183 to 204 (RAGDTGSSRPQEGEAVALNQEP) form a disordered region. Residues Cys-211 and Cys-212 are each lipidated (S-geranylgeranyl cysteine).

The protein belongs to the small GTPase superfamily. Rab family. Requires Mg(2+) as cofactor. As to expression, expressed in kidney, liver, and intestine mainly by epithelial cells. Expressed in hippocampus (at protein level).

The protein resides in the recycling endosome membrane. Its subcellular location is the melanosome. The protein localises to the cell projection. It is found in the dendrite. It catalyses the reaction GTP + H2O = GDP + phosphate + H(+). With respect to regulation, regulated by guanine nucleotide exchange factors (GEFs) which promote the exchange of bound GDP for free GTP. Regulated by GTPase activating proteins (GAPs) which increase the GTP hydrolysis activity. Inhibited by GDP dissociation inhibitors (GDIs). The small GTPases Rab are key regulators of intracellular membrane trafficking, from the formation of transport vesicles to their fusion with membranes. Rabs cycle between an inactive GDP-bound form and an active GTP-bound form that is able to recruit to membranes different set of downstream effectors directly responsible for vesicle formation, movement, tethering and fusion. RAB17 is involved in transcytosis, the directed movement of endocytosed material through the cell and its exocytosis from the plasma membrane at the opposite side. Mainly observed in epithelial cells, transcytosis mediates, for instance, the transcellular transport of immunoglobulins from the basolateral surface to the apical surface. Most probably controls membrane trafficking through apical recycling endosomes in a post-endocytic step of transcytosis. Required for melanosome transport and release from melanocytes, it also regulates dendrite and dendritic spine development. May also play a role in cell migration. This chain is Ras-related protein Rab-17, found in Mus musculus (Mouse).